The primary structure comprises 831 residues: Probable beta-glucosidase H (831 aa).

A glycan (N-linked (GlcNAc...) asparagine) is linked at N13. D225 is a catalytic residue. Residues 389–549 enclose the PA14 domain; the sequence is RLLSNAVIHF…DAEEMINRAV (161 aa). N-linked (GlcNAc...) asparagine glycosylation is found at N474, N514, N604, N629, N726, and N823.

The protein belongs to the glycosyl hydrolase 3 family.

It is found in the secreted. It catalyses the reaction Hydrolysis of terminal, non-reducing beta-D-glucosyl residues with release of beta-D-glucose.. Its pathway is glycan metabolism; cellulose degradation. Its function is as follows. Beta-glucosidases are one of a number of cellulolytic enzymes involved in the degradation of cellulosic biomass. Catalyzes the last step releasing glucose from the inhibitory cellobiose. The protein is Probable beta-glucosidase H (bglH) of Emericella nidulans (strain FGSC A4 / ATCC 38163 / CBS 112.46 / NRRL 194 / M139) (Aspergillus nidulans).